A 450-amino-acid polypeptide reads, in one-letter code: UDP-N-acetylmuramoylalanine--D-glutamate ligase (450 aa).

Residue 119 to 125 (GSNGKTT) coordinates ATP.

This sequence belongs to the MurCDEF family.

It localises to the cytoplasm. It catalyses the reaction UDP-N-acetyl-alpha-D-muramoyl-L-alanine + D-glutamate + ATP = UDP-N-acetyl-alpha-D-muramoyl-L-alanyl-D-glutamate + ADP + phosphate + H(+). It functions in the pathway cell wall biogenesis; peptidoglycan biosynthesis. In terms of biological role, cell wall formation. Catalyzes the addition of glutamate to the nucleotide precursor UDP-N-acetylmuramoyl-L-alanine (UMA). The chain is UDP-N-acetylmuramoylalanine--D-glutamate ligase from Streptococcus pneumoniae (strain P1031).